We begin with the raw amino-acid sequence, 270 residues long: Urease accessory protein UreD (270 aa).

The protein belongs to the UreD family. UreD, UreF and UreG form a complex that acts as a GTP-hydrolysis-dependent molecular chaperone, activating the urease apoprotein by helping to assemble the nickel containing metallocenter of UreC. The UreE protein probably delivers the nickel.

The protein localises to the cytoplasm. In terms of biological role, required for maturation of urease via the functional incorporation of the urease nickel metallocenter. The polypeptide is Urease accessory protein UreD (Synechocystis sp. (strain ATCC 27184 / PCC 6803 / Kazusa)).